Here is a 306-residue protein sequence, read N- to C-terminus: Methyl-CpG-binding domain-containing protein 7 (306 aa).

Positions 1–11 (MQTRSSSSPSA) are enriched in polar residues. The disordered stretch occupies residues 1-21 (MQTRSSSSPSANHRRETQLQI). MBD domains follow at residues 21–92 (IADP…QDKT), 106–171 (GVEY…RVLQ), and 172–242 (NRRG…ERLP). Arg-118, Arg-145, and Arg-174 each carry asymmetric dimethylarginine. Residues 163-306 (IEQQLRVLQN…AFVSLIEDRS (144 aa)) form a required for interaction with PRMT11 region.

Interacts with PRMT11. Interacts (via C-terminus) with IDM2, but not with IDM1. Interacts with IDM3. Part of a complex made of MBD7, IDM1, IDM2 and IDM3. Post-translationally, methylated by PRMT11. As to expression, expressed in leaves, buds, flowers, stems, siliques, mature seeds and roots.

Its subcellular location is the nucleus. The protein resides in the chromosome. Transcriptional regulator that binds CpG islands in promoters where the DNA is methylated at position 5 of cytosine within CpG dinucleotides. May directly affect chromatin structure by inducing intra- and inter- chromatin compaction via bridging over multiple methylated CpG sites. Acts as an anti-silencing factor that prevents DNA hypermethylation and gene repression. Requires high mCG density for binding. Recognizes preferentially mCGs located in transposable elements. Required for active DNA demethylation. Prefers to target genomic loci around chromocenters. In Arabidopsis thaliana (Mouse-ear cress), this protein is Methyl-CpG-binding domain-containing protein 7.